The chain runs to 318 residues: Aspartate carbamoyltransferase catalytic subunit (318 aa).

Carbamoyl phosphate contacts are provided by R54 and T55. K82 lines the L-aspartate pocket. 3 residues coordinate carbamoyl phosphate: R104, H134, and Q137. L-aspartate contacts are provided by R174 and R230. Carbamoyl phosphate-binding residues include G271 and P272.

The protein belongs to the aspartate/ornithine carbamoyltransferase superfamily. ATCase family. Heterododecamer (2C3:3R2) of six catalytic PyrB chains organized as two trimers (C3), and six regulatory PyrI chains organized as three dimers (R2).

It carries out the reaction carbamoyl phosphate + L-aspartate = N-carbamoyl-L-aspartate + phosphate + H(+). It participates in pyrimidine metabolism; UMP biosynthesis via de novo pathway; (S)-dihydroorotate from bicarbonate: step 2/3. Functionally, catalyzes the condensation of carbamoyl phosphate and aspartate to form carbamoyl aspartate and inorganic phosphate, the committed step in the de novo pyrimidine nucleotide biosynthesis pathway. This is Aspartate carbamoyltransferase catalytic subunit from Clavibacter michiganensis subsp. michiganensis (strain NCPPB 382).